The sequence spans 672 residues: Beta-galactosidase GanA (672 aa).

Arg105 is a substrate binding site. Cys109 lines the Zn(2+) pocket. Asn143 contributes to the substrate binding site. The active-site Proton donor is Glu144. Cys149, Cys151, and Cys154 together coordinate Zn(2+). Glu308 (nucleophile) is an active-site residue. Substrate is bound by residues Trp316 and 356–359; that span reads EKLH.

Belongs to the glycosyl hydrolase 42 family. In terms of assembly, homotrimer.

It catalyses the reaction Hydrolysis of terminal non-reducing beta-D-galactose residues in beta-D-galactosides.. With respect to regulation, inhibited by zinc, cobalt and copper ions. Functionally, involved in galactan degradation. Hydrolyzes galactooligosaccharides released by the endo-beta-1,4-galactanase GanB from galactan. Degrades galactotetraose, galactotriose and galactobiose, generating galactose as the end product. It is unable to use lactose. In vitro, shows maximal activity with o-nitrophenyl-beta-D-galactopyranoside (ONPG) and p-nitrophenyl-beta-D-galactopyranoside (PNPG) as substrates, trace activity with p-nitrophenyl-alpha-L-arabinopyranoside and o-nitrophenyl-beta-D-fucopyranoside as substrates, but no activity with p-nitrophenyl-alpha-D-galactopyranoside, p-nitrophenyl-beta-D-glucopyranoside, o-nitrophenyl-beta-D-xylopyranoside, p-nitrophenyl-beta-D-mannopyranoside or p-nitrophenyl-alpha-L-arabinofuranoside as substrates. In Bacillus subtilis (strain 168), this protein is Beta-galactosidase GanA.